A 146-amino-acid polypeptide reads, in one-letter code: Large ribosomal subunit protein uL15 (146 aa).

The segment at 1 to 65 (MSDIQLNTLK…GQMPLQRRLP (65 aa)) is disordered. The span at 24–34 (RGIGSGLGKTA) shows a compositional bias: gly residues.

Belongs to the universal ribosomal protein uL15 family. Part of the 50S ribosomal subunit.

Its function is as follows. Binds to the 23S rRNA. The sequence is that of Large ribosomal subunit protein uL15 from Bordetella parapertussis (strain 12822 / ATCC BAA-587 / NCTC 13253).